Here is a 595-residue protein sequence, read N- to C-terminus: E3 ubiquitin-protein ligase synoviolin B (595 aa).

The chain crosses the membrane as a helical span at residues 1-19 (MTGASLALTASVVAHAYYL). The Lumenal portion of the chain corresponds to 20–35 (KNQFYPTVVYLTKSSP). A helical membrane pass occupies residues 36-56 (SMAILYIQAFVLVFLLGKFMG). The Cytoplasmic portion of the chain corresponds to 57 to 92 (KVFFGQLRAAEMEHLLERSWYAVTETCLAFTVFRDD). The chain crosses the membrane as a helical span at residues 93–113 (FSPRFVALFTLLLFLKCFHWL). Topologically, residues 114–129 (AEDRVDFMERSPNISW) are lumenal. A helical transmembrane segment spans residues 130–150 (LFHFRILALMLLLGVLDAFFV). Over 151 to 163 (SHAYNSLVTRGAS) the chain is Cytoplasmic. Residues 164–184 (VQLVFGFEYAILMTMILAVFI) form a helical membrane-spanning segment. Residues 185 to 218 (KYILHSVDLQSENPWDNKAVYMLYTELFTGFIKV) lie on the Lumenal side of the membrane. Residues 219 to 239 (LLYMAFMTIMVKVHTFPLFAI) form a helical membrane-spanning segment. An interaction with p53/TP53 region spans residues 230–264 (KVHTFPLFAIRPMYLAMRQFKKAVTDAVMSRRAIR). Residues 240-595 (RPMYLAMRQF…LQKLETTDSQ (356 aa)) are Cytoplasmic-facing. Residues C285, C288, C301, H303, H306, C309, C320, and C323 each coordinate Zn(2+). The segment at 285–324 (CIICREEMVSGAKRLPCNHIFHTSCLRSWFQRQQTCPTCR) adopts an RING-type; atypical zinc-finger fold. Over residues 335 to 353 (QPQTPAEQQNQHQAQQQPT) the composition is skewed to low complexity. Disordered stretches follow at residues 335 to 370 (QPQT…LPPF) and 386 to 426 (PVPG…PGAA). Residues 354–370 (PVVPPQPNFPPGMLPPF) show a composition bias toward pro residues. A compositionally biased stretch (low complexity) spans 390–408 (APVGNPPDEANPGSSSGSS). The stretch at 463–494 (EELRAMEGHERQNLEARLQCLQNIHTLLDAAM) forms a coiled coil. A disordered region spans residues 509-595 (PPQPPVSSSS…LQKLETTDSQ (87 aa)). Residues 514–552 (VSSSSSSSASASTEPTTSSVSEPVIDTSSIVTTDSSQQS) are compositionally biased toward low complexity.

Belongs to the HRD1 family. In terms of assembly, homodimer.

The protein localises to the endoplasmic reticulum membrane. It catalyses the reaction S-ubiquitinyl-[E2 ubiquitin-conjugating enzyme]-L-cysteine + [acceptor protein]-L-lysine = [E2 ubiquitin-conjugating enzyme]-L-cysteine + N(6)-ubiquitinyl-[acceptor protein]-L-lysine.. It functions in the pathway protein modification; protein ubiquitination. In terms of biological role, E3 ubiquitin-protein ligase which accepts ubiquitin specifically from endoplasmic reticulum-associated UBC7 E2 ligase and transfers it to substrates, promoting their degradation. Component of the endoplasmic reticulum quality control (ERQC) system also called ER-associated degradation (ERAD) involved in ubiquitin-dependent degradation of misfolded endoplasmic reticulum proteins. Also promotes the degradation of normal but naturally short-lived proteins. Protects cells from ER stress-induced apoptosis. Sequesters p53 in the cytoplasm and promotes its degradation, thereby negatively regulating its biological function in transcription, cell cycle regulation and apoptosis. In Xenopus laevis (African clawed frog), this protein is E3 ubiquitin-protein ligase synoviolin B (syvn1-b).